We begin with the raw amino-acid sequence, 406 residues long: MTFSVDKVRADFPVLSREVNGLPLAYLDSAASAQKPSQVIDAEAEFYRHGYAAVHRGIHTLSAQATEKMENVRKRASLFINARSAEELVFVRGTTEGINLVANSWGNSNVRAGDNIIISQMEHHANIVPWQMLCARVGAELRVIPLNPDGTLQLETLPTLFDEKTRLLAITHVSNVLGTENPLAEMITLAHQHGAKVLVDGAQAVMHHPVDVQALDCDFYVFSGHKLYGPTGIGILYVKEALLQEMPPWEGGGSMIATVSLSEGTTWTKAPWRFEAGTPNTGGIIGLGAALEYVSAQGLNNIAEYEQNLMHYALSQLESVPDLTLYGPQNRLGVIAFNLGKHHAYDVGSFLDNYGIAVRTGHHCAMPLMAYYNVPAMCRASLAMYNTHEEVDRLVTGLQRIHRLLG.

K226 is modified (N6-(pyridoxal phosphate)lysine). The active-site Cysteine persulfide intermediate is C364.

Belongs to the class-V pyridoxal-phosphate-dependent aminotransferase family. Csd subfamily. As to quaternary structure, homodimer. Interacts with SufE and the SufBCD complex composed of SufB, SufC and SufD. The interaction with SufE is required to mediate the direct transfer of the sulfur atom from the S-sulfanylcysteine. Pyridoxal 5'-phosphate serves as cofactor.

Its subcellular location is the cytoplasm. The enzyme catalyses (sulfur carrier)-H + L-cysteine = (sulfur carrier)-SH + L-alanine. It carries out the reaction L-selenocysteine + AH2 = hydrogenselenide + L-alanine + A + H(+). Its pathway is cofactor biosynthesis; iron-sulfur cluster biosynthesis. In terms of biological role, cysteine desulfurases mobilize the sulfur from L-cysteine to yield L-alanine, an essential step in sulfur metabolism for biosynthesis of a variety of sulfur-containing biomolecules. Component of the suf operon, which is activated and required under specific conditions such as oxidative stress and iron limitation. Acts as a potent selenocysteine lyase in vitro, that mobilizes selenium from L-selenocysteine. Selenocysteine lyase activity is however unsure in vivo. The sequence is that of Cysteine desulfurase from Escherichia coli O157:H7 (strain EC4115 / EHEC).